The chain runs to 330 residues: Olfactory receptor 11H6 (330 aa).

The Extracellular portion of the chain corresponds to 1–43 (MFFIIHSLVTSVFLTALGPQNRTMHFVTEFVLLGFHGQREMQS). N-linked (GlcNAc...) asparagine glycosylation occurs at Asn-21. Residues 44–64 (CFFSFILVLYLLTLLGNGAIV) form a helical membrane-spanning segment. Over 65 to 72 (CAVKLDRR) the chain is Cytoplasmic. A helical membrane pass occupies residues 73 to 93 (LHTPMYILLGNFAFLEIWYIS). Over 94-117 (STVPNMLVNILSEIKTISFSGCFL) the chain is Extracellular. The cysteines at positions 115 and 207 are disulfide-linked. The helical transmembrane segment at 118-138 (QFYFFFSLGTTECFFLSVMAY) threads the bilayer. Over 139–157 (DRYLAICRPLHYPSIMTGK) the chain is Cytoplasmic. Residues 158-178 (FCIILVCVCWVGGFLCYPVPI) form a helical membrane-spanning segment. Over 179–215 (VLISQLPFCGPNIIDHLVCDPGPLFALACISAPSTEL) the chain is Extracellular. The helical transmembrane segment at 216-235 (ICYTFNSMIIFGPFLSILGS) threads the bilayer. Residues 236–255 (YTLVIRAVLCIPSGAGRTKA) lie on the Cytoplasmic side of the membrane. A helical membrane pass occupies residues 256–276 (FSTCGSHLMVVSLFYGTLMVM). Residues 277-289 (YVSPTSGNPAGMQ) lie on the Extracellular side of the membrane. A helical transmembrane segment spans residues 290-310 (KIITLVYTAMTPFLNPLIYSL). The Cytoplasmic portion of the chain corresponds to 311–330 (RNKDMKDALKRVLGLTVSQN).

Belongs to the G-protein coupled receptor 1 family.

Its subcellular location is the cell membrane. Functionally, odorant receptor. The polypeptide is Olfactory receptor 11H6 (OR11H6) (Homo sapiens (Human)).